The sequence spans 215 residues: Heart- and neural crest derivatives-expressed protein 1 (215 aa).

Disordered stretches follow at residues 53–109 (APDF…RTES) and 166–198 (LKKA…EKRI). The span at 65-89 (AAAAATAYGPDARPGQSPGRLEALG) shows a compositional bias: low complexity. Positions 92–104 (LGRRKGSGPKKER) are enriched in basic residues. The 53-residue stretch at 94–146 (RRKGSGPKKERRRTESINSAFAELRECIPNVPADTKLSKIKTLRLATSYIAYL) folds into the bHLH domain. A Phosphothreonine; by PLK4 modification is found at threonine 107. A Phosphoserine; by PLK4 modification is found at serine 109.

In terms of assembly, efficient DNA binding requires dimerization with another bHLH protein. Forms homodimers and heterodimers with TCF3 gene products E12 and E47, HAND2 and HEY1, HEY2 and HEYL (hairy-related transcription factors). Interacts with MDFIC. Interacts with SOX15; the interaction enhances HAND1-induced differentiation of trophoblast giant cells. Phosphorylation by PLK4 disrupts the interaction with MDFIC and leads to translocation into the nucleoplasm, allowing dimerization and transcription factor activity. Heart.

It localises to the nucleus. The protein resides in the nucleoplasm. Its subcellular location is the nucleolus. Transcription factor that plays an essential role in both trophoblast giant cell differentiation and in cardiac morphogenesis. Binds the DNA sequence 5'-NRTCTG-3' (non-canonical E-box). Acts as a transcriptional repressor of SOX15. In the adult, could be required for ongoing expression of cardiac-specific genes. This is Heart- and neural crest derivatives-expressed protein 1 (HAND1) from Homo sapiens (Human).